Reading from the N-terminus, the 180-residue chain is GTP cyclohydrolase 1 (180 aa).

Residues cysteine 71, histidine 74, and cysteine 142 each coordinate Zn(2+).

This sequence belongs to the GTP cyclohydrolase I family. As to quaternary structure, homomer.

The catalysed reaction is GTP + H2O = 7,8-dihydroneopterin 3'-triphosphate + formate + H(+). The protein operates within cofactor biosynthesis; 7,8-dihydroneopterin triphosphate biosynthesis; 7,8-dihydroneopterin triphosphate from GTP: step 1/1. The protein is GTP cyclohydrolase 1 of Helicobacter pylori (strain Shi470).